The primary structure comprises 255 residues: Endonuclease 8 2 (255 aa).

Proline 2 acts as the Schiff-base intermediate with DNA in catalysis. Glutamate 3 serves as the catalytic Proton donor. Lysine 51 functions as the Proton donor; for beta-elimination activity in the catalytic mechanism. Glutamine 67 and asparagine 164 together coordinate DNA. Residues tryptophan 221 to arginine 255 form an FPG-type zinc finger. Arginine 245 (proton donor; for delta-elimination activity) is an active-site residue.

This sequence belongs to the FPG family. It depends on Zn(2+) as a cofactor.

The enzyme catalyses 2'-deoxyribonucleotide-(2'-deoxyribose 5'-phosphate)-2'-deoxyribonucleotide-DNA = a 3'-end 2'-deoxyribonucleotide-(2,3-dehydro-2,3-deoxyribose 5'-phosphate)-DNA + a 5'-end 5'-phospho-2'-deoxyribonucleoside-DNA + H(+). In terms of biological role, involved in base excision repair of DNA damaged by oxidation or by mutagenic agents. Acts as a DNA glycosylase that recognizes and removes damaged bases. Has AP (apurinic/apyrimidinic) lyase activity and introduces nicks in the DNA strand. Cleaves the DNA backbone by beta-delta elimination to generate a single-strand break at the site of the removed base with both 3'- and 5'-phosphates. This Mycobacterium bovis (strain ATCC BAA-935 / AF2122/97) protein is Endonuclease 8 2 (nei2).